A 444-amino-acid polypeptide reads, in one-letter code: Citrate-proton symporter (444 aa).

At 1–41 (MPTARCSMRASSTAPVRMMATAGGARIGAILRVTSGNFLEQ) the chain is on the cytoplasmic side. Residues 42–62 (FDFFLFGFYATYIAHTFFPAS) form a helical membrane-spanning segment. The Periplasmic portion of the chain corresponds to 63–72 (SEFASLMMTF). The chain crosses the membrane as a helical span at residues 73–93 (AVFGAGFLMRPIGAIVLGAYI). Over 94–114 (DKVGRRKGLIVTLSIMATGTF) the chain is Cytoplasmic. A helical membrane pass occupies residues 115–135 (LIVLIPSYQTIGLWAPLLVLI). Topologically, residues 136–137 (GR) are periplasmic. The helical transmembrane segment at 138–158 (LLQGFSAGAELGGVSVYLAEI) threads the bilayer. Over 159–177 (ATPGRKGFYTSWQSGSQQV) the chain is Cytoplasmic. A helical membrane pass occupies residues 178 to 198 (AIMVAAAMGFALNAVLEPSAI). Residue Ser-199 is a topological domain, periplasmic. The helical transmembrane segment at 200–220 (DWGWRIPFLFGVLIVPFIFIL) threads the bilayer. Residues 221–251 (RRKLEETQEFTARRHHLAMRQVFATLLANWQ) are Cytoplasmic-facing. Residues 252–272 (VVIAGMMMVAMTTTAFYLITV) form a helical membrane-spanning segment. Residues 273–289 (YAPTFGKKVLMLSASDS) lie on the Periplasmic side of the membrane. A helical membrane pass occupies residues 290 to 310 (LLVTLLVAISNFFWLPVGGAL). At 311 to 318 (SDRFGRRS) the chain is on the cytoplasmic side. The helical transmembrane segment at 319 to 339 (VLIAMTLLALATAWPALTMLA) threads the bilayer. Residue Asn-340 is a topological domain, periplasmic. A helical membrane pass occupies residues 341–361 (APSFLMMLSVLLWLSFIYGMY). Over 362-379 (NGAMIPALTEIMPAEVRV) the chain is Cytoplasmic. Residues 380 to 400 (AGFSLAYSLATAVFGGFTPVI) traverse the membrane as a helical segment. The Periplasmic portion of the chain corresponds to 401–411 (STALIEYTGDK). A helical transmembrane segment spans residues 412–432 (ASPGYWMSFAAICGLLATCYL). The Cytoplasmic segment spans residues 433–444 (YRRSAVALQTAR).

Belongs to the major facilitator superfamily. Metabolite:H+ Symporter (MHS) family (TC 2.A.1.6) family.

It localises to the cell inner membrane. In terms of biological role, uptake of citrate across the boundary membrane with the concomitant transport of protons into the cell (symport system). In Klebsiella pneumoniae, this protein is Citrate-proton symporter (citH).